Reading from the N-terminus, the 59-residue chain is UPF0434 protein Shewmr7_2490 (59 aa).

The protein belongs to the UPF0434 family.

The sequence is that of UPF0434 protein Shewmr7_2490 from Shewanella sp. (strain MR-7).